The sequence spans 101 residues: Urease subunit beta (101 aa).

It belongs to the urease beta subunit family. In terms of assembly, heterotrimer of UreA (gamma), UreB (beta) and UreC (alpha) subunits. Three heterotrimers associate to form the active enzyme.

The protein localises to the cytoplasm. The catalysed reaction is urea + 2 H2O + H(+) = hydrogencarbonate + 2 NH4(+). The protein operates within nitrogen metabolism; urea degradation; CO(2) and NH(3) from urea (urease route): step 1/1. The chain is Urease subunit beta from Ruegeria pomeroyi (strain ATCC 700808 / DSM 15171 / DSS-3) (Silicibacter pomeroyi).